The primary structure comprises 146 residues: Ribosome maturation factor RimP (146 aa).

Belongs to the RimP family.

It is found in the cytoplasm. Its function is as follows. Required for maturation of 30S ribosomal subunits. In Helicobacter pylori (strain ATCC 700392 / 26695) (Campylobacter pylori), this protein is Ribosome maturation factor RimP.